The primary structure comprises 243 residues: Isoprenyl transferase 2 (243 aa).

Asp23 is a catalytic residue. A Mg(2+)-binding site is contributed by Asp23. Residues 24-27 (GNGR), Trp28, Arg36, His40, and 68-70 (STE) contribute to the substrate site. The active-site Proton acceptor is the Asn71. Substrate-binding positions include Trp72, Arg74, Arg191, and 197 to 199 (RTS). Residue Glu210 participates in Mg(2+) binding.

Belongs to the UPP synthase family. In terms of assembly, homodimer. The cofactor is Mg(2+).

In terms of biological role, catalyzes the condensation of isopentenyl diphosphate (IPP) with allylic pyrophosphates generating different type of terpenoids. The chain is Isoprenyl transferase 2 from Corynebacterium efficiens (strain DSM 44549 / YS-314 / AJ 12310 / JCM 11189 / NBRC 100395).